The following is an 817-amino-acid chain: Trehalose-phosphatase (817 aa).

A glycosyltransferase region spans residues 1–547 (MSVYGKIPST…LAATKTDQRI (547 aa)).

It in the N-terminal section; belongs to the glycosyltransferase 20 family. In the C-terminal section; belongs to the trehalose phosphatase family. Component of the trehalose synthase complex that contains at least tps1, ntp1, and tpp1. Interacts with tps1. Interacts with ntp1. Mg(2+) serves as cofactor.

It carries out the reaction alpha,alpha-trehalose 6-phosphate + H2O = alpha,alpha-trehalose + phosphate. It participates in carbohydrate biosynthesis. Phosphatase catalytic subunit of the trehalose synthase complex that catalyzes the production of trehalose from glucose-6-phosphate and UDP-alpha-D-glucose in a two step process. The disaccharide trehalose serves as a storage carbohydrate that is mobilized during nutrient stress and spore germination. Together with ntp1, regulates the level of trehalose as a protectant for cell integrity during thermal, osmotic, and oxidative stress. This is Trehalose-phosphatase from Schizosaccharomyces pombe (strain 972 / ATCC 24843) (Fission yeast).